Consider the following 482-residue polypeptide: Hydrogenase transcriptional regulatory protein HoxA (482 aa).

Positions 7–121 constitute a Response regulatory domain; the sequence is TVLVVDDETR…HLIDTVRQAV (115 aa). The residue at position 55 (D55) is a 4-aspartylphosphate. The Sigma-54 factor interaction domain maps to 167–394; the sequence is APGSPLDAVC…LRNEIYRAVA (228 aa). Residues 193–200 and 265–274 each bind ATP; these read GESGTGKE and EIGDTSPAFQ. Positions 456–475 form a DNA-binding region, H-T-H motif; the sequence is KTHAAKELGLSRVGLRQKLL.

It is found in the cytoplasm. Its function is as follows. Probable member of the two-component regulatory system involved in the regulation of the hydrogenase activity. HoxA is probably phosphorylated by a sensory component (which could be HoxX) and then acts in conjunction with sigma-54 as a transcriptional activator. The sequence is that of Hydrogenase transcriptional regulatory protein HoxA (hoxA) from Cupriavidus necator (strain ATCC 17699 / DSM 428 / KCTC 22496 / NCIMB 10442 / H16 / Stanier 337) (Ralstonia eutropha).